Here is a 251-residue protein sequence, read N- to C-terminus: Diphthine synthase (251 aa).

S-adenosyl-L-methionine-binding positions include Leu9, Asp84, Val87, 112 to 113 (SI), Leu160, Ala194, and His219.

This sequence belongs to the diphthine synthase family. In terms of assembly, homodimer.

It catalyses the reaction 2-[(3S)-amino-3-carboxypropyl]-L-histidyl-[translation elongation factor 2] + 3 S-adenosyl-L-methionine = diphthine-[translation elongation factor 2] + 3 S-adenosyl-L-homocysteine + 3 H(+). It functions in the pathway protein modification; peptidyl-diphthamide biosynthesis. S-adenosyl-L-methionine-dependent methyltransferase that catalyzes the trimethylation of the amino group of the modified target histidine residue in translation elongation factor 2 (EF-2), to form an intermediate called diphthine. The three successive methylation reactions represent the second step of diphthamide biosynthesis. This chain is Diphthine synthase, found in Archaeoglobus fulgidus (strain ATCC 49558 / DSM 4304 / JCM 9628 / NBRC 100126 / VC-16).